Consider the following 197-residue polypeptide: Dermorphin-1 (197 aa).

A signal peptide spans Met-1–Ser-20. Residues Val-21–Met-45 constitute a propeptide that is removed on maturation. The segment at Glu-24–Met-197 is disordered. Over residues Glu-30–His-39 the composition is skewed to acidic residues. Residues Glu-40–Ser-62 show a composition bias toward basic and acidic residues. Met-49 bears the D-methionine mark. Position 54 is an aspartic acid 1-amide (Asp-54). Positions Glu-56 to Met-77 are excised as a propeptide. The residue at position 81 (Ala-81) is a D-alanine (Ala). The residue at position 86 (Ser-86) is a Serine amide. The span at Glu-88 to Glu-97 shows a compositional bias: basic and acidic residues. Positions Glu-88 to Met-112 are excised as a propeptide. A D-alanine (Ala) modification is found at Ala-116. Ser-121 is subject to Serine amide. The span at Glu-123 to Glu-132 shows a compositional bias: basic and acidic residues. Positions Glu-123–Met-147 are excised as a propeptide. Residue Ala-151 is modified to D-alanine (Ala). Ser-156 is modified (serine amide). Residues Glu-158 to Met-182 constitute a propeptide that is removed on maturation. Acidic residues predominate over residues Glu-167–His-176. Ala-186 bears the D-alanine (Ala) mark. At Ser-191 the chain carries Serine amide. Residues Glu-193–Met-197 constitute a propeptide that is removed on maturation.

This sequence belongs to the frog skin active peptide (FSAP) family. Dermorphin subfamily. In terms of tissue distribution, expressed by the skin glands.

The protein localises to the secreted. Functionally, dermorphin has a very potent opiate-like activity. It has high affinity and selectivity for mu-type opioid receptors. In terms of biological role, deltorphin has a very potent opiate-like activity. It has high affinity and selectivity for delta-type opioid receptors. In Phyllomedusa sauvagei (Sauvage's leaf frog), this protein is Dermorphin-1.